The following is a 602-amino-acid chain: ATP-dependent DNA helicase II subunit 1 (602 aa).

In terms of domain architecture, Ku spans F268 to S483. Phosphoserine is present on residues S370, S371, and S372.

This sequence belongs to the ku70 family. In terms of assembly, heterodimer of YKU70/HDF1 and YKU80/HDF2. Post-translationally, sumoylated by MMS21.

Its subcellular location is the nucleus. It localises to the chromosome. The protein localises to the telomere. The catalysed reaction is ATP + H2O = ADP + phosphate + H(+). In terms of biological role, single-stranded DNA-dependent ATP-dependent helicase. Involved in non-homologous end joining (NHEJ) DNA double strand break repair. DNA-binding is sequence-independent but has a high affinity to nicks in double-stranded DNA and to the ends of duplex DNA. Binds to naturally occurring chromosomal ends, and therefore provides chromosomal end protection. Appears to have a role in recruitment of telomerase and CDC13 to the telomere and the subsequent telomere elongation. Required also for telomere recombination to repair telomeric ends in the absence of telomerase. KU70, of the KU70/KU80 heterodimer, binds to the stem loop of TLC1, the RNA component of telomerase. Involved in telomere maintenance. Interacts with telomeric repeats and subtelomeric sequences thereby controlling telomere length and protecting against subtelomeric rearrangement. Maintains telomeric chromatin, which is involved in silencing the expression of genes located at the telomere. Required for mating-type switching. In Saccharomyces cerevisiae (strain ATCC 204508 / S288c) (Baker's yeast), this protein is ATP-dependent DNA helicase II subunit 1 (YKU70).